The primary structure comprises 96 residues: Large ribosomal subunit protein bL27 (96 aa).

Positions 1–9 (MLRLDLQFF) are excised as a propeptide.

This sequence belongs to the bacterial ribosomal protein bL27 family. The N-terminus is cleaved by ribosomal processing cysteine protease Prp.

The protein is Large ribosomal subunit protein bL27 of Geobacillus sp. (strain WCH70).